A 260-amino-acid polypeptide reads, in one-letter code: Phosphate import ATP-binding protein PstB 1 (260 aa).

Positions 8-255 (TETKNVYDVL…PEHKRTEDYV (248 aa)) constitute an ABC transporter domain. Residue 46 to 53 (GPSGCGKS) participates in ATP binding.

Belongs to the ABC transporter superfamily. Phosphate importer (TC 3.A.1.7) family. In terms of assembly, the complex is composed of two ATP-binding proteins (PstB), two transmembrane proteins (PstC and PstA) and a solute-binding protein (PstS).

The protein resides in the cell membrane. The catalysed reaction is phosphate(out) + ATP + H2O = ADP + 2 phosphate(in) + H(+). In terms of biological role, part of the ABC transporter complex PstSACB involved in phosphate import. Responsible for energy coupling to the transport system. In Shouchella clausii (strain KSM-K16) (Alkalihalobacillus clausii), this protein is Phosphate import ATP-binding protein PstB 1.